We begin with the raw amino-acid sequence, 240 residues long: ATP synthase subunit a (240 aa).

6 consecutive transmembrane segments (helical) span residues 41–61 (WLVMAFLFLVSKFTLGNLEII), 92–112 (FFPMIATFALYIAVANLIGLI), 121–141 (SINTTLALTLIVWATHHVIGF), 152–172 (FIGPMKWLVPLMLPIELISNF), 191–211 (VLLGILFGLAGMFFAPLPIMV), and 212–232 (LGVLVSLVQAMVFVLLTVVYF).

This sequence belongs to the ATPase A chain family. F-type ATPases have 2 components, CF(1) - the catalytic core - and CF(0) - the membrane proton channel. CF(1) has five subunits: alpha(3), beta(3), gamma(1), delta(1), epsilon(1). CF(0) has three main subunits: a(1), b(2) and c(9-12). The alpha and beta chains form an alternating ring which encloses part of the gamma chain. CF(1) is attached to CF(0) by a central stalk formed by the gamma and epsilon chains, while a peripheral stalk is formed by the delta and b chains.

It is found in the cell inner membrane. Functionally, key component of the proton channel; it plays a direct role in the translocation of protons across the membrane. The polypeptide is ATP synthase subunit a (Desulfotalea psychrophila (strain LSv54 / DSM 12343)).